We begin with the raw amino-acid sequence, 1430 residues long: 3'-5' RNA helicase YTHDC2 (1430 aa).

The segment at 1–37 (MSRPSSVSPRQPAPGGGGGGGPSPCGPGGGGRAKGLK) is disordered. A compositionally biased stretch (gly residues) spans 14–33 (PGGGGGGGPSPCGPGGGGRA). The 69-residue stretch at 38–106 (DIRIDEEVKI…NRYLTVKKKD (69 aa)) folds into the R3H domain. In terms of domain architecture, Helicase ATP-binding spans 203-369 (VKIIKENKVV…FGSCPVIYIQ (167 aa)). An ATP-binding site is contributed by 216-223 (GETGSGKT). The short motif at 316-319 (DEVH) is the DEAH box element. ANK repeat units lie at residues 506–538 (TSAT…SKAS) and 539–571 (NGWM…FGNL). The Helicase C-terminal domain maps to 612-784 (LLYNICHSCD…ELCLHTKLLA (173 aa)). A phosphoserine mark is found at Ser-1089, Ser-1090, and Ser-1092. Residues 1164 to 1174 (EQSAGLQQPSG) show a composition bias toward polar residues. Positions 1164-1288 (EQSAGLQQPS…SPSPRPNMPV (125 aa)) are disordered. The span at 1191–1200 (SSWRSNNSRK) shows a compositional bias: low complexity. Phosphoserine is present on Ser-1202. Positions 1231–1249 (KYKDRGILHPKRGTEDRSD) are enriched in basic and acidic residues. Over residues 1250–1264 (QSSVKSTDSSSYPSP) the composition is skewed to low complexity. Ser-1263, Ser-1267, and Ser-1281 each carry phosphoserine. One can recognise a YTH domain in the interval 1288-1418 (VRYFIMKSSN…QVGEQLLQLW (131 aa)). RNA-binding positions include 1294–1296 (KSS), Trp-1310, and Trp-1360.

Belongs to the DEAD box helicase family. DEAH subfamily. Interacts with MEIOC; binds transcripts that regulate the mitotic cell cycle inhibiting progression into metaphase, thereby allowing meiotic prophase to proceed normally. Interacts (via ANK repeats) with XRN1. Interacts with ZCCHC4. Associates with the small ribosomal subunit. Interacts with RBM46.

It localises to the cytoplasm. The protein resides in the perinuclear region. It carries out the reaction ATP + H2O = ADP + phosphate + H(+). 3'-5' RNA helicase that plays a key role in the male and female germline by promoting transition from mitotic to meiotic divisions in stem cells. Specifically recognizes and binds N6-methyladenosine (m6A)-containing RNAs, a modification present at internal sites of mRNAs and some non-coding RNAs that plays a role in the efficiency of RNA processing and stability. Essential for ensuring a successful progression of the meiotic program in the germline by regulating the level of m6A-containing RNAs. Acts by binding and promoting degradation of m6A-containing mRNAs: the 3'-5' RNA helicase activity is required for this process and RNA degradation may be mediated by XRN1 exoribonuclease. Required for both spermatogenesis and oogenesis. This chain is 3'-5' RNA helicase YTHDC2, found in Pongo abelii (Sumatran orangutan).